A 323-amino-acid polypeptide reads, in one-letter code: Beta-ketoacyl-[acyl-carrier-protein] synthase III (323 aa).

Catalysis depends on residues Cys113 and His250. An ACP-binding region spans residues 251–255 (QANKR). The active site involves Asn280.

This sequence belongs to the thiolase-like superfamily. FabH family. Homodimer.

The protein resides in the cytoplasm. The catalysed reaction is malonyl-[ACP] + acetyl-CoA + H(+) = 3-oxobutanoyl-[ACP] + CO2 + CoA. It functions in the pathway lipid metabolism; fatty acid biosynthesis. Its function is as follows. Catalyzes the condensation reaction of fatty acid synthesis by the addition to an acyl acceptor of two carbons from malonyl-ACP. Catalyzes the first condensation reaction which initiates fatty acid synthesis and may therefore play a role in governing the total rate of fatty acid production. Possesses both acetoacetyl-ACP synthase and acetyl transacylase activities. Its substrate specificity determines the biosynthesis of branched-chain and/or straight-chain of fatty acids. The protein is Beta-ketoacyl-[acyl-carrier-protein] synthase III of Chelativorans sp. (strain BNC1).